The following is a 296-amino-acid chain: Cell division protein DivIB (296 aa).

At 1–29 (MTKEIPKINNEYLKEKRKKQRIQQRRVQR) the chain is on the cytoplasmic side. The helical transmembrane segment at 30–50 (MIVGILVVIVLLILVYMFTPI) threads the bilayer. The POTRA domain maps to 51-119 (SHIKSADIKG…NPIEVNVKEH (69 aa)). At 51 to 296 (SHIKSADIKG…NKIKDEESSE (246 aa)) the chain is on the extracellular side. Positions 256–273 (NNGQTSSASAKEVQSGTA) are enriched in polar residues. Residues 256 to 296 (NNGQTSSASAKEVQSGTASEDKAKDDLQKALNKIKDEESSE) are disordered. Residues 274-296 (SEDKAKDDLQKALNKIKDEESSE) show a composition bias toward basic and acidic residues.

This sequence belongs to the FtsQ/DivIB family. DivIB subfamily.

The protein resides in the cell membrane. In terms of biological role, cell division protein that may be involved in stabilizing or promoting the assembly of the division complex. This is Cell division protein DivIB from Staphylococcus pseudintermedius (strain HKU10-03).